A 535-amino-acid chain; its full sequence is EGF domain-specific O-linked N-acetylglucosamine transferase (535 aa).

An N-terminal signal peptide occupies residues 1–16 (MFILLMFVLLLQEILA). N-linked (GlcNAc...) asparagine glycans are attached at residues Asn22 and Asn271. A Required for optimal activity motif is present at residues 303–305 (DYD). N-linked (GlcNAc...) asparagine glycosylation is found at Asn362 and Asn501.

This sequence belongs to the glycosyltransferase 61 family.

Its subcellular location is the endoplasmic reticulum lumen. It catalyses the reaction L-seryl-[protein] + UDP-N-acetyl-alpha-D-glucosamine = 3-O-(N-acetyl-beta-D-glucosaminyl)-L-seryl-[protein] + UDP + H(+). The enzyme catalyses L-threonyl-[protein] + UDP-N-acetyl-alpha-D-glucosamine = 3-O-(N-acetyl-beta-D-glucosaminyl)-L-threonyl-[protein] + UDP + H(+). Catalyzes the transfer of a single N-acetylglucosamine from UDP-GlcNAc to a serine or threonine residue in extracellular proteins resulting in their modification with a beta-linked N-acetylglucosamine (O-GlcNAc). Specifically glycosylates the Thr residue located between the fifth and sixth conserved cysteines of folded EGF-like domains. In Gallus gallus (Chicken), this protein is EGF domain-specific O-linked N-acetylglucosamine transferase (EOGT).